Reading from the N-terminus, the 100-residue chain is Urease subunit gamma (100 aa).

Belongs to the urease gamma subunit family. Heterotrimer of UreA (gamma), UreB (beta) and UreC (alpha) subunits. Three heterotrimers associate to form the active enzyme.

The protein resides in the cytoplasm. It catalyses the reaction urea + 2 H2O + H(+) = hydrogencarbonate + 2 NH4(+). Its pathway is nitrogen metabolism; urea degradation; CO(2) and NH(3) from urea (urease route): step 1/1. The sequence is that of Urease subunit gamma from Streptomyces griseus subsp. griseus (strain JCM 4626 / CBS 651.72 / NBRC 13350 / KCC S-0626 / ISP 5235).